The primary structure comprises 844 residues: RPA-related protein RADX (844 aa).

The segment at residues 228–331 (WHNRKNFPAL…LISTMEICLN (104 aa)) is a DNA-binding region (OB). 2 disordered regions span residues 571 to 609 (PASETLQNASPPSTSQAAAKEGHYHERGSKRSQDDRPMD) and 626 to 664 (GPTANPVPVPQPHSSAQMKGNKPNIPSRENSTANATGKS). Residues 572–587 (ASETLQNASPPSTSQA) show a composition bias toward polar residues. Residues 590-608 (KEGHYHERGSKRSQDDRPM) are compositionally biased toward basic and acidic residues. The span at 652–662 (SRENSTANATG) shows a compositional bias: polar residues.

The protein localises to the chromosome. Functionally, single-stranded DNA-binding protein recruited to replication forks to maintain genome stability. Prevents fork collapse by antagonizing the accumulation of RAD51 at forks to ensure the proper balance of fork remodeling and protection without interfering with the capacity of cells to complete homologous recombination of double-strand breaks. This Rattus norvegicus (Rat) protein is RPA-related protein RADX.